A 687-amino-acid polypeptide reads, in one-letter code: uncharacterized protein (687 aa).

Residues 277 to 295 are compositionally biased toward low complexity; sequence SVCSSQSFSSGQSDISMSS. Disordered stretches follow at residues 277–337, 342–361, and 531–564; these read SVCS…QDCD, DTES…SEMP, and HVEQ…PSLI. Positions 300–313 are enriched in polar residues; the sequence is NGSSVGNGSLSPMT.

This is an uncharacterized protein from Caenorhabditis elegans.